The following is a 377-amino-acid chain: Succinyl-diaminopimelate desuccinylase (377 aa).

H66 contributes to the Zn(2+) binding site. Residue D68 is part of the active site. D99 contributes to the Zn(2+) binding site. The active-site Proton acceptor is E133. Residues E134, E163, and H349 each contribute to the Zn(2+) site.

It belongs to the peptidase M20A family. DapE subfamily. As to quaternary structure, homodimer. Requires Zn(2+) as cofactor. The cofactor is Co(2+).

It carries out the reaction N-succinyl-(2S,6S)-2,6-diaminopimelate + H2O = (2S,6S)-2,6-diaminopimelate + succinate. Its pathway is amino-acid biosynthesis; L-lysine biosynthesis via DAP pathway; LL-2,6-diaminopimelate from (S)-tetrahydrodipicolinate (succinylase route): step 3/3. Catalyzes the hydrolysis of N-succinyl-L,L-diaminopimelic acid (SDAP), forming succinate and LL-2,6-diaminopimelate (DAP), an intermediate involved in the bacterial biosynthesis of lysine and meso-diaminopimelic acid, an essential component of bacterial cell walls. This chain is Succinyl-diaminopimelate desuccinylase, found in Legionella pneumophila (strain Lens).